A 123-amino-acid chain; its full sequence is Holo-[acyl-carrier-protein] synthase (123 aa).

Positions 8 and 60 each coordinate Mg(2+).

This sequence belongs to the P-Pant transferase superfamily. AcpS family. Requires Mg(2+) as cofactor.

It is found in the cytoplasm. The enzyme catalyses apo-[ACP] + CoA = holo-[ACP] + adenosine 3',5'-bisphosphate + H(+). Functionally, transfers the 4'-phosphopantetheine moiety from coenzyme A to a Ser of acyl-carrier-protein. The polypeptide is Holo-[acyl-carrier-protein] synthase (Wolbachia pipientis wMel).